The sequence spans 337 residues: MSGSPVKRQRMESALDQLKQFTTVVADTGDFNAIDEYKPQDATTNPSLILAAAQMPAYQELVEEAIAYGKKLGGPQEEQIKNAIDKLFVLFGAEILKKIPGRVSTEVDARLSFDKDAMVARARRIIELYKEAGISKDRILIKLSSTWEGIQAGKELEEQHGIHCNMTLLFSFAQAVACAEAGVTLISPFVGRILDWHVANTDKKSYEPQEDPGVKSVTKIYNYYKKFGYKTIVMGASFRNTGEIKALAGCDFLTISPKLLGELLKDSSKLAPTLSVKAAQTSDLEKIHLDEKAFRWLHNEDQMAVEKLSDGIRKFAADAIKLERMLTERMFSAENGK.

The short motif at 1–10 is the Nuclear localization signal element; sequence MSGSPVKRQR. Lys-115 is modified (N6-acetyllysine). Lys-142 serves as the catalytic Schiff-base intermediate with substrate. The residue at position 219 (Lys-219) is an N6-acetyllysine. Phosphoserine is present on residues Ser-237 and Ser-256. 3 positions are modified to N6-acetyllysine: Lys-269, Lys-286, and Lys-321.

The protein belongs to the transaldolase family. Type 1 subfamily. In terms of assembly, homodimer. Interacts with KPNA1 and KPNA4.

Its subcellular location is the nucleus. It localises to the cytoplasm. The catalysed reaction is D-sedoheptulose 7-phosphate + D-glyceraldehyde 3-phosphate = D-erythrose 4-phosphate + beta-D-fructose 6-phosphate. It participates in carbohydrate degradation; pentose phosphate pathway; D-glyceraldehyde 3-phosphate and beta-D-fructose 6-phosphate from D-ribose 5-phosphate and D-xylulose 5-phosphate (non-oxidative stage): step 2/3. Functionally, catalyzes the rate-limiting step of the non-oxidative phase in the pentose phosphate pathway. Catalyzes the reversible conversion of sedheptulose-7-phosphate and D-glyceraldehyde 3-phosphate into erythrose-4-phosphate and beta-D-fructose 6-phosphate. This chain is Transaldolase (Taldo1), found in Rattus norvegicus (Rat).